The sequence spans 553 residues: HTH-type transcriptional regulator SgrR (553 aa).

The region spanning 1 to 117 (MPSSRLQQQF…LSQIERRFRQ (117 aa)) is the HTH marR-type domain. The segment at residues 26 to 49 (LQELANVLHCSKRHIRSLLNNMQK) is a DNA-binding region (H-T-H motif). The interval 163-494 (EPEADLAHHW…NDLSKEVSQW (332 aa)) is solute-binding.

Its function is as follows. Activates the small RNA gene sgrS under glucose-phosphate stress conditions as well as yfdZ. Represses its own transcription under both stress and non-stress conditions. Might act as a sensor of the intracellular accumulation of phosphoglucose by binding these molecules in its C-terminal solute-binding domain. This is HTH-type transcriptional regulator SgrR from Photorhabdus laumondii subsp. laumondii (strain DSM 15139 / CIP 105565 / TT01) (Photorhabdus luminescens subsp. laumondii).